Reading from the N-terminus, the 378-residue chain is Putative protein YbfL (378 aa).

The protein belongs to the transposase 11 family.

In Escherichia coli (strain K12), this protein is Putative protein YbfL (ybfL).